The sequence spans 356 residues: Protein-glutamate methylesterase/protein-glutamine glutaminase 4 (356 aa).

Residues 15-132 (RVLVVDDSAV…SVGEMTADLV (118 aa)) form the Response regulatory domain. At Asp-66 the chain carries 4-aspartylphosphate. The CheB-type methylesterase domain maps to 162–348 (ARTTLQVVAI…PLDRIAPEIL (187 aa)). Residues Ser-174, His-200, and Asp-296 contribute to the active site.

This sequence belongs to the CheB family. In terms of processing, phosphorylated by CheA. Phosphorylation of the N-terminal regulatory domain activates the methylesterase activity.

Its subcellular location is the cytoplasm. It carries out the reaction [protein]-L-glutamate 5-O-methyl ester + H2O = L-glutamyl-[protein] + methanol + H(+). The enzyme catalyses L-glutaminyl-[protein] + H2O = L-glutamyl-[protein] + NH4(+). Involved in chemotaxis. Part of a chemotaxis signal transduction system that modulates chemotaxis in response to various stimuli. Catalyzes the demethylation of specific methylglutamate residues introduced into the chemoreceptors (methyl-accepting chemotaxis proteins or MCP) by CheR. Also mediates the irreversible deamidation of specific glutamine residues to glutamic acid. In Anaeromyxobacter dehalogenans (strain 2CP-C), this protein is Protein-glutamate methylesterase/protein-glutamine glutaminase 4.